A 1312-amino-acid polypeptide reads, in one-letter code: DNA repair protein RAD50 (1312 aa).

ATP is bound by residues Arg-13, Asn-38, Gly-39, Gly-41, Lys-42, Thr-43, Thr-44, Val-67, Asp-69, and Gln-159. Residue Thr-43 coordinates Mg(2+). A Mg(2+)-binding site is contributed by Gln-159. Coiled-coil stretches lie at residues 228-359, 401-598, and 635-673; these read TSKE…QADR, RERQ…AKLN, and SQDF…ITQL. The residue at position 635 (Ser-635) is a Phosphoserine; by ATM. In terms of domain architecture, Zinc-hook spans 635 to 734; it reads SQDFESDLDR…RRDEMLGLVP (100 aa). Zn(2+) is bound by residues Cys-681 and Cys-684. A Phosphothreonine modification is found at Thr-690. Coiled coils occupy residues 706–734 and 789–1079; these read RLAP…GLVP and LTDV…GRQK. Lys-959 is modified (N6-acetyllysine).

The protein belongs to the SMC family. RAD50 subfamily. As to quaternary structure, component of the MRN complex composed of two heterodimers RAD50 and MRE11 associated with a single NBN. The MRN complexes dimerize on DNA to form joined MRN-MRN oligomers required for DNA double-strand break repair. As part of the MRN complex, interacts with MCM8 and MCM9; the interaction recruits the complex to DNA repair sites. Component of the BASC complex, at least composed of BRCA1, MSH2, MSH6, MLH1, ATM, BLM, RAD50, MRE11 and NBN. Found in a complex with TERF2. Interacts with RINT1. Interacts with BRCA1 via its N-terminal domain. Interacts with DCLRE1C/Artemis. Interacts with MRNIP. Interacts with CYREN (via XLF motif). Interacts with C1QBP and MRE11; interaction takes place in absence of DNA damage to form the MRC (MRE11-RAD50-C1QBP) complex that inhibits the activity of MRE11. In terms of assembly, (Microbial infection) Interacts with herpes simplex virus 1 protein UL12. It depends on Zn(2+) as a cofactor. Post-translationally, phosphorylation at Ser-635 by ATM in response to DNA damage is required for double-strand break (DSB) repair. As to expression, expressed at very low level in most tissues, except in testis where it is expressed at higher level. Expressed in fibroblasts.

The protein resides in the nucleus. Its subcellular location is the chromosome. The protein localises to the telomere. The catalysed reaction is ATP + H2O = ADP + phosphate + H(+). In terms of biological role, component of the MRN complex, which plays a central role in double-strand break (DSB) repair, DNA recombination, maintenance of telomere integrity and meiosis. The MRN complex is involved in the repair of DNA double-strand breaks (DSBs) via homologous recombination (HR), an error-free mechanism which primarily occurs during S and G2 phases. The complex (1) mediates the end resection of damaged DNA, which generates proper single-stranded DNA, a key initial steps in HR, and is (2) required for the recruitment of other repair factors and efficient activation of ATM and ATR upon DNA damage. The MRN complex possesses single-strand endonuclease activity and double-strand-specific 3'-5' exonuclease activity, which are provided by MRE11, to initiate end resection, which is required for single-strand invasion and recombination. Within the complex, RAD50 is both required to bind DNA ends and hold them in close proximity and regulate the activity of MRE11. RAD50 provides an ATP-dependent control of MRE11 by positioning DNA ends into the MRE11 active site: ATP-binding induces a large structural change from an open form with accessible MRE11 nuclease sites into a closed form. The MRN complex is also required for DNA damage signaling via activation of the ATM and ATR kinases: the nuclease activity of MRE11 is not required to activate ATM and ATR. The MRN complex is also required for the processing of R-loops. In telomeres the MRN complex may modulate t-loop formation. The polypeptide is DNA repair protein RAD50 (Homo sapiens (Human)).